Consider the following 191-residue polypeptide: Fe/S biogenesis protein NfuA (191 aa).

[4Fe-4S] cluster-binding residues include Cys-149 and Cys-152.

Belongs to the NfuA family. As to quaternary structure, homodimer. It depends on [4Fe-4S] cluster as a cofactor.

Functionally, involved in iron-sulfur cluster biogenesis. Binds a 4Fe-4S cluster, can transfer this cluster to apoproteins, and thereby intervenes in the maturation of Fe/S proteins. Could also act as a scaffold/chaperone for damaged Fe/S proteins. In Salmonella arizonae (strain ATCC BAA-731 / CDC346-86 / RSK2980), this protein is Fe/S biogenesis protein NfuA.